The following is a 55-amino-acid chain: ATP synthase protein 8 (55 aa).

Residues 4-24 (LNPNPWFTILIFTWAVFLTIL) form a helical membrane-spanning segment.

This sequence belongs to the ATPase protein 8 family. As to quaternary structure, F-type ATPases have 2 components, CF(1) - the catalytic core - and CF(0) - the membrane proton channel.

Its subcellular location is the mitochondrion membrane. Functionally, mitochondrial membrane ATP synthase (F(1)F(0) ATP synthase or Complex V) produces ATP from ADP in the presence of a proton gradient across the membrane which is generated by electron transport complexes of the respiratory chain. F-type ATPases consist of two structural domains, F(1) - containing the extramembraneous catalytic core and F(0) - containing the membrane proton channel, linked together by a central stalk and a peripheral stalk. During catalysis, ATP synthesis in the catalytic domain of F(1) is coupled via a rotary mechanism of the central stalk subunits to proton translocation. Part of the complex F(0) domain. Minor subunit located with subunit a in the membrane. The chain is ATP synthase protein 8 (mt-atp8) from Polypterus ornatipinnis (Ornate bichir).